Reading from the N-terminus, the 458-residue chain is Mitochondrial-processing peptidase subunit beta (458 aa).

The transit peptide at 1–41 (MYRRLASGLYQTSQRRIAQVQPKSVFVPETIVTTLPNGFRV) directs the protein to the mitochondrion. Histidine 73 lines the Zn(2+) pocket. Residue glutamate 76 is the Proton acceptor of the active site. Positions 77 and 153 each coordinate Zn(2+).

Belongs to the peptidase M16 family. Heterodimer of mppa-1 (alpha) and mppb-1 (beta) subunits, forming the mitochondrial processing protease (MPP) in which mppa-1 is involved in substrate recognition and binding and mppb-1 is the catalytic subunit. It depends on Zn(2+) as a cofactor.

The protein localises to the mitochondrion matrix. The enzyme catalyses Release of N-terminal transit peptides from precursor proteins imported into the mitochondrion, typically with Arg in position P2.. With respect to regulation, binding to mppa-1 is required for catalytic activity. Inhibited by metal chelator ethylenediaminetetraacetic acid (EDTA). Catalytic subunit of the essential mitochondrial processing protease (MPP), which cleaves the mitochondrial sequence off newly imported precursors proteins. Preferentially, cleaves after an arginine at position P2. The sequence is that of Mitochondrial-processing peptidase subunit beta from Caenorhabditis elegans.